Consider the following 398-residue polypeptide: Phosphoglycerate kinase (398 aa).

Substrate contacts are provided by residues 21–23, Arg36, 59–62, Arg119, and Arg157; these read DFN and HLGR. Residues Lys208, Gly296, Glu327, and 354-357 contribute to the ATP site; that span reads GGDS.

This sequence belongs to the phosphoglycerate kinase family. Monomer.

It localises to the cytoplasm. It carries out the reaction (2R)-3-phosphoglycerate + ATP = (2R)-3-phospho-glyceroyl phosphate + ADP. It functions in the pathway carbohydrate degradation; glycolysis; pyruvate from D-glyceraldehyde 3-phosphate: step 2/5. The chain is Phosphoglycerate kinase from Streptococcus pneumoniae (strain Taiwan19F-14).